The following is a 376-amino-acid chain: Probable inactive protein kinase At3g63330 (376 aa).

The Protein kinase domain maps to 1-370 (MVERGPTVYL…VDEALQHPYF (370 aa)).

Belongs to the protein kinase superfamily. Ser/Thr protein kinase family.

The polypeptide is Probable inactive protein kinase At3g63330 (Arabidopsis thaliana (Mouse-ear cress)).